A 79-amino-acid chain; its full sequence is Small ribosomal subunit protein bS18 (79 aa).

The protein belongs to the bacterial ribosomal protein bS18 family. In terms of assembly, part of the 30S ribosomal subunit. Forms a tight heterodimer with protein bS6.

In terms of biological role, binds as a heterodimer with protein bS6 to the central domain of the 16S rRNA, where it helps stabilize the platform of the 30S subunit. The protein is Small ribosomal subunit protein bS18 of Ureaplasma parvum serovar 3 (strain ATCC 27815 / 27 / NCTC 11736).